The following is a 502-amino-acid chain: Cytochrome P450 2J3 (502 aa).

Residue Cys-448 coordinates heme.

Belongs to the cytochrome P450 family. The cofactor is heme. Abundantly expressed in heart and liver.

Its subcellular location is the endoplasmic reticulum membrane. It localises to the microsome membrane. The enzyme catalyses an organic molecule + reduced [NADPH--hemoprotein reductase] + O2 = an alcohol + oxidized [NADPH--hemoprotein reductase] + H2O + H(+). In terms of biological role, this enzyme metabolizes arachidonic acid predominantly via a NADPH-dependent olefin epoxidation mainly to 14,15-, 11,12-, and 8,9-epoxyeicosatrienoic acids (EET). It also acts as an omega-1-hydroxylase by metabolizing arachidonic acid to 19-hydroxyeicosatetraenoic acid (19-OH-AA). This is Cytochrome P450 2J3 (Cyp2j3) from Rattus norvegicus (Rat).